Here is a 32-residue protein sequence, read N- to C-terminus: Photosystem I reaction center subunit XII (32 aa).

Residues 4–26 (ISDSQIIVILLSVFITSILALRL) form a helical membrane-spanning segment.

Belongs to the PsaM family.

It localises to the plastid. It is found in the chloroplast thylakoid membrane. This chain is Photosystem I reaction center subunit XII, found in Marchantia polymorpha (Common liverwort).